We begin with the raw amino-acid sequence, 103 residues long: Small integral membrane protein 32 (103 aa).

Residues 55–75 traverse the membrane as a helical segment; the sequence is YLLLFFLLLLSVALVVLFIGC.

The protein resides in the membrane. The protein is Small integral membrane protein 32 of Homo sapiens (Human).